We begin with the raw amino-acid sequence, 380 residues long: Maintenance of mitochondrial morphology protein 1 (380 aa).

The Lumenal segment spans residues 1–64; it reads MQGRAIWAEG…IVPSLSFIQG (64 aa). Residues 65–85 form a helical membrane-spanning segment; that stretch reads FMAGQAVLLMLFLGLFRYFFM. Residues 86–380 lie on the Cytoplasmic side of the membrane; the sequence is TSSPGTRAQQ…IGTSPADPLA (295 aa). In terms of domain architecture, SMP-LTD spans 147–369; sequence APESLDWLNV…WPHFWHIPLP (223 aa).

This sequence belongs to the MMM1 family. As to quaternary structure, homodimer. Component of the ER-mitochondria encounter structure (ERMES) or MDM complex, composed of MMM1, MDM10, MDM12 and MDM34. An MMM1 homodimer associates with one molecule of MDM12 on each side in a pairwise head-to-tail manner, and the SMP-LTD domains of MMM1 and MDM12 generate a continuous hydrophobic tunnel for phospholipid trafficking.

Its subcellular location is the endoplasmic reticulum membrane. In terms of biological role, component of the ERMES/MDM complex, which serves as a molecular tether to connect the endoplasmic reticulum (ER) and mitochondria. Components of this complex are involved in the control of mitochondrial shape and protein biogenesis, and function in nonvesicular lipid trafficking between the ER and mitochondria. The MDM12-MMM1 subcomplex functions in the major beta-barrel assembly pathway that is responsible for biogenesis of all outer membrane beta-barrel proteins, and acts in a late step after the SAM complex. The MDM10-MDM12-MMM1 subcomplex further acts in the TOM40-specific pathway after the action of the MDM12-MMM1 complex. Essential for establishing and maintaining the structure of mitochondria and maintenance of mtDNA nucleoids. This chain is Maintenance of mitochondrial morphology protein 1, found in Malassezia globosa (strain ATCC MYA-4612 / CBS 7966) (Dandruff-associated fungus).